Consider the following 312-residue polypeptide: Structure-specific endonuclease subunit SLX1 (312 aa).

The GIY-YIG domain maps to 9–92; the sequence is DFYGCYLLQS…QHGYQTRYIK (84 aa). Residues 219–282 form an SLX1-type zinc finger; the sequence is CQFCNKIIKH…IPQSPKCPKC (64 aa).

Belongs to the SLX1 family. In terms of assembly, forms a heterodimer with SLX4. It depends on a divalent metal cation as a cofactor.

It localises to the nucleus. Functionally, catalytic subunit of the SLX1-SLX4 structure-specific endonuclease that resolves DNA secondary structures generated during DNA repair and recombination. Has endonuclease activity towards branched DNA substrates, introducing single-strand cuts in duplex DNA close to junctions with ss-DNA. This chain is Structure-specific endonuclease subunit SLX1, found in Candida glabrata (strain ATCC 2001 / BCRC 20586 / JCM 3761 / NBRC 0622 / NRRL Y-65 / CBS 138) (Yeast).